Here is a 351-residue protein sequence, read N- to C-terminus: Transaldolase (351 aa).

K138 acts as the Schiff-base intermediate with substrate in catalysis.

The protein belongs to the transaldolase family. Type 2 subfamily.

It is found in the cytoplasm. It carries out the reaction D-sedoheptulose 7-phosphate + D-glyceraldehyde 3-phosphate = D-erythrose 4-phosphate + beta-D-fructose 6-phosphate. The protein operates within carbohydrate degradation; pentose phosphate pathway; D-glyceraldehyde 3-phosphate and beta-D-fructose 6-phosphate from D-ribose 5-phosphate and D-xylulose 5-phosphate (non-oxidative stage): step 2/3. Transaldolase is important for the balance of metabolites in the pentose-phosphate pathway. The sequence is that of Transaldolase from Neisseria meningitidis serogroup C / serotype 2a (strain ATCC 700532 / DSM 15464 / FAM18).